The following is a 396-amino-acid chain: Phosphopentomutase (396 aa).

Mn(2+) contacts are provided by D14, D286, H291, D327, H328, and H339.

This sequence belongs to the phosphopentomutase family. Requires Mn(2+) as cofactor.

The protein resides in the cytoplasm. The enzyme catalyses 2-deoxy-alpha-D-ribose 1-phosphate = 2-deoxy-D-ribose 5-phosphate. It catalyses the reaction alpha-D-ribose 1-phosphate = D-ribose 5-phosphate. It participates in carbohydrate degradation; 2-deoxy-D-ribose 1-phosphate degradation; D-glyceraldehyde 3-phosphate and acetaldehyde from 2-deoxy-alpha-D-ribose 1-phosphate: step 1/2. Functionally, isomerase that catalyzes the conversion of deoxy-ribose 1-phosphate (dRib-1-P) and ribose 1-phosphate (Rib-1-P) to deoxy-ribose 5-phosphate (dRib-5-P) and ribose 5-phosphate (Rib-5-P), respectively. The polypeptide is Phosphopentomutase (Staphylococcus epidermidis (strain ATCC 35984 / DSM 28319 / BCRC 17069 / CCUG 31568 / BM 3577 / RP62A)).